We begin with the raw amino-acid sequence, 175 residues long: Inorganic pyrophosphatase (175 aa).

Substrate is bound by residues lysine 29, arginine 43, and tyrosine 55. Residues aspartate 65, aspartate 70, and aspartate 102 each coordinate Mg(2+). Tyrosine 141 contacts substrate.

The protein belongs to the PPase family. As to quaternary structure, homohexamer. The cofactor is Mg(2+).

It localises to the cytoplasm. The catalysed reaction is diphosphate + H2O = 2 phosphate + H(+). In terms of biological role, catalyzes the hydrolysis of inorganic pyrophosphate (PPi) forming two phosphate ions. The sequence is that of Inorganic pyrophosphatase from Rickettsia bellii (strain RML369-C).